The sequence spans 75 residues: Large ribosomal subunit protein bL31 (75 aa).

4 residues coordinate Zn(2+): Cys-16, Cys-18, Cys-37, and Cys-40.

The protein belongs to the bacterial ribosomal protein bL31 family. Type A subfamily. In terms of assembly, part of the 50S ribosomal subunit. Requires Zn(2+) as cofactor.

In terms of biological role, binds the 23S rRNA. The sequence is that of Large ribosomal subunit protein bL31 from Baumannia cicadellinicola subsp. Homalodisca coagulata.